Consider the following 221-residue polypeptide: Cytidylate kinase (221 aa).

11–19 (GPCGAGKST) contacts ATP.

It belongs to the cytidylate kinase family. Type 1 subfamily.

The protein localises to the cytoplasm. It catalyses the reaction CMP + ATP = CDP + ADP. The catalysed reaction is dCMP + ATP = dCDP + ADP. In Mycoplasmopsis agalactiae (strain NCTC 10123 / CIP 59.7 / PG2) (Mycoplasma agalactiae), this protein is Cytidylate kinase.